Consider the following 357-residue polypeptide: Sorbitol dehydrogenase (357 aa).

An N-acetylalanine modification is found at Ala2. Cys45 contributes to the Zn(2+) binding site. A substrate-binding site is contributed by Tyr51. Zn(2+) is bound by residues His70 and Glu71. Substrate is bound at residue Glu156. The NAD(+) site is built by Ile184, Asp204, and Arg209. Ser211 and Ser225 each carry phosphoserine. NAD(+) contacts are provided by residues 273 to 275 (VGL) and 297 to 299 (VFR). 2 residues coordinate substrate: Arg299 and Tyr300.

The protein belongs to the zinc-containing alcohol dehydrogenase family. As to quaternary structure, homotetramer. It depends on Zn(2+) as a cofactor.

It is found in the mitochondrion membrane. The protein localises to the cell projection. It localises to the cilium. The protein resides in the flagellum. The catalysed reaction is xylitol + NAD(+) = D-xylulose + NADH + H(+). It catalyses the reaction L-iditol + NAD(+) = keto-L-sorbose + NADH + H(+). It carries out the reaction keto-D-fructose + NADH + H(+) = D-sorbitol + NAD(+). In terms of biological role, polyol dehydrogenase that catalyzes the reversible NAD(+)-dependent oxidation of various sugar alcohols. Is active with xylitol, L-iditol and D-sorbitol (D-glucitol) as substrates, leading to the C2-oxidized products D-xylulose, L-sorbose and D-fructose, respectively. Is a key enzyme in the polyol pathway that interconverts glucose and fructose via sorbitol, which constitutes an important alternate route for glucose metabolism. May play a role in sperm motility by using sorbitol as an alternative energy source for sperm motility. This is Sorbitol dehydrogenase (SORD) from Pongo abelii (Sumatran orangutan).